A 239-amino-acid chain; its full sequence is MLEIGFCTLEDQCPYLKDKRSRIEYKYIENCSKEINNELIKRGWRRFGRYFSRPICKDCDECLSLRILVNEYNFSRSERRVVNKNINTKVILRTPNLSNEHLFLYDKYHRFMEEKKNWKRYDLSFKQYYNLYVDGFMNFGYELAFYIEDKLVCVDLIDILEDGISSIYCFYDPDFSYFSLGKFSLLNEIQIAKKMNLDYIYLGYFVKKCQSLSYKADYTPNEILKGTKELFENEVLWEK.

Belongs to the R-transferase family. Bpt subfamily.

Its subcellular location is the cytoplasm. It carries out the reaction N-terminal L-glutamyl-[protein] + L-leucyl-tRNA(Leu) = N-terminal L-leucyl-L-glutamyl-[protein] + tRNA(Leu) + H(+). It catalyses the reaction N-terminal L-aspartyl-[protein] + L-leucyl-tRNA(Leu) = N-terminal L-leucyl-L-aspartyl-[protein] + tRNA(Leu) + H(+). Its function is as follows. Functions in the N-end rule pathway of protein degradation where it conjugates Leu from its aminoacyl-tRNA to the N-termini of proteins containing an N-terminal aspartate or glutamate. The sequence is that of Aspartate/glutamate leucyltransferase from Campylobacter jejuni subsp. jejuni serotype O:23/36 (strain 81-176).